We begin with the raw amino-acid sequence, 196 residues long: MSRYRGPRLKKIRRLGALPGLTRKTPKSGSNLKKKFNSGKKEQYRIRLQEKQKLRFHYGLTERQLLRYVHIAGKAKRSTGQVLLQLLEMRLDNIIFRLGMASTIPGARQLVNHRHILVNGRIVNIPSFRCKPRDIITTKDNQRSKGLVQNSIASSDPGKLPKHLTIDTVEYKGLVNKILDRKWVGLKINELLVVEY.

Positions M89–V169 constitute an S4 RNA-binding domain.

It belongs to the universal ribosomal protein uS4 family. As to quaternary structure, part of the 30S ribosomal subunit. Contacts protein S5. The interaction surface between S4 and S5 is involved in control of translational fidelity.

It is found in the plastid. Its subcellular location is the chloroplast. Its function is as follows. One of the primary rRNA binding proteins, it binds directly to 16S rRNA where it nucleates assembly of the body of the 30S subunit. In terms of biological role, with S5 and S12 plays an important role in translational accuracy. This chain is Small ribosomal subunit protein uS4c (rps4), found in Stipellula capensis (Cape rice grass).